Reading from the N-terminus, the 418-residue chain is UDP-N-acetylglucosamine 1-carboxyvinyltransferase (418 aa).

22 to 23 (KN) serves as a coordination point for phosphoenolpyruvate. Arginine 92 is a binding site for UDP-N-acetyl-alpha-D-glucosamine. Cysteine 116 functions as the Proton donor in the catalytic mechanism. The residue at position 116 (cysteine 116) is a 2-(S-cysteinyl)pyruvic acid O-phosphothioketal. Residues 121–125 (RPIDL), aspartate 305, and leucine 327 each bind UDP-N-acetyl-alpha-D-glucosamine.

This sequence belongs to the EPSP synthase family. MurA subfamily.

It localises to the cytoplasm. The enzyme catalyses phosphoenolpyruvate + UDP-N-acetyl-alpha-D-glucosamine = UDP-N-acetyl-3-O-(1-carboxyvinyl)-alpha-D-glucosamine + phosphate. It participates in cell wall biogenesis; peptidoglycan biosynthesis. Functionally, cell wall formation. Adds enolpyruvyl to UDP-N-acetylglucosamine. The protein is UDP-N-acetylglucosamine 1-carboxyvinyltransferase of Campylobacter lari (strain RM2100 / D67 / ATCC BAA-1060).